Here is a 257-residue protein sequence, read N- to C-terminus: Nopaline permease ATP-binding protein P (257 aa).

Residues 8-253 (LVAEDVHKNF…PTSPRCRAFL (246 aa)) form the ABC transporter domain. Residue 40 to 47 (GSSGSGKS) participates in ATP binding.

Belongs to the ABC transporter superfamily.

It localises to the cell inner membrane. In terms of biological role, component of the nopaline active transport system probably consisting of four subunits: Q, M, P and T. This system is also capable of transporting octopine provided that catabolic functions are induced with nopaline. This Agrobacterium fabrum (strain C58 / ATCC 33970) (Agrobacterium tumefaciens (strain C58)) protein is Nopaline permease ATP-binding protein P (nocP).